Consider the following 625-residue polypeptide: DELLA protein SLR1 (625 aa).

Residues 1–34 (MKREYQEAGGSSGGGSSADMGSCKDKVMAGAAGE) form a disordered region. A DELLA motif motif is present at residues 39–43 (DELLA). Positions 167–209 (TADPSAADSARDTKRMRTGGGSTSSSSSSSSSLGGGASRGSVV) are disordered. The span at 189–198 (TSSSSSSSSS) shows a compositional bias: low complexity. The 390-residue stretch at 232-621 (VDTQEAGIRL…RPLIATSAWR (390 aa)) folds into the GRAS domain. The interval 239-294 (IRLVHALLACAEAVQQENFAAAEALVKQIPTLAASQGGAMRKVAAYFGEALARRVY) is leucine repeat I (LRI). The segment at 241 to 278 (LVHALLACAEAVQQENFAAAEALVKQIPTLAASQGGAM) is required for possible homodimerization. Residues 246-250 (LACAE) carry the LxCxE motif motif. The segment at 313–378 (HAHFYESCPY…GGPPSFRLTG (66 aa)) is VHIID. A VHIID motif is present at residues 344-348 (VHVVD). The interval 392–431 (QVGWKLAQFAHTIRVDFQYRGLVAATLADLEPFMLQPEGE) is leucine repeat II (LRII). The interval 441–542 (IAVNSVFELH…EVYLGRQICN (102 aa)) is PFYRE. The LXXLL motif signature appears at 449–453 (LHRLL). Residues 545 to 621 (ACEGAERTER…RPLIATSAWR (77 aa)) form an SAW region.

Belongs to the GRAS family. DELLA subfamily. In terms of assembly, may be a homodimer. Interacts directly with the GID2 component of the SCF(GID2) complex. Interacts with GID1 in a GA-dependent manner, probably leading to its interaction with GID2 and its subsequent degradation. Interacts with D14 and GID1 in an strigolactone-dependent manner. Interacts with HD16/EL1. Phosphorylated on Ser/Thr residues in the N-terminal part. Both phosphorylated and unphosphorylated forms are degraded upon GA treatment, suggesting that phosphorylation does not trigger ubiquitination. Phosphorylated by HD16/EL1. Phosphorylation enhances its stability. In terms of processing, ubiquitinated. Upon GA application it is ubiquitinated by the SCF(GID2) complex, leading to its subsequent degradation. In terms of tissue distribution, expressed in nodes, internodes, leaf sheats of young seedlings and ears of adult plants. Weakly expressed in leaf blade and root.

It is found in the nucleus. Probable transcriptional regulator that acts as a repressor of the gibberellin (GA) signaling pathway. Probably acts by participating in large multiprotein complexes that repress transcription of GA-inducible genes. Upon GA application, it is degraded by the proteasome, allowing the GA signaling pathway. In contrast, its overexpression prevents the GA signaling pathway and induces a dwarf phenotype. This is DELLA protein SLR1 from Oryza sativa subsp. japonica (Rice).